A 509-amino-acid chain; its full sequence is Solute carrier family 2, facilitated glucose transporter member 4 (509 aa).

At 1 to 24 (MPSGFQQIGSEDGEPPQQRVTGTL) the chain is on the cytoplasmic side. The interaction with SRFBP1 stretch occupies residues 7 to 13 (QIGSEDG). Ser10 carries the post-translational modification Phosphoserine. A helical membrane pass occupies residues 25–45 (VLAVFSAVLGSLQFGYNIGVI). Over 46-81 (NAPQKVIEQSYNETWLGRQGPEGPSSIPPGTLTTLW) the chain is Extracellular. N-linked (GlcNAc...) asparagine glycosylation occurs at Asn57. A helical transmembrane segment spans residues 82-102 (ALSVAIFSVGGMISSFLIGII). Topologically, residues 103–111 (SQWLGRKRA) are cytoplasmic. A helical transmembrane segment spans residues 112–132 (MLVNNVLAVLGGSLMGLANAA). Residues 133–142 (ASYEMLILGR) lie on the Extracellular side of the membrane. A helical membrane pass occupies residues 143 to 163 (FLIGAYSGLTSGLVPMYVGEI). The Cytoplasmic portion of the chain corresponds to 164–171 (APTHLRGA). A helical transmembrane segment spans residues 172–192 (LGTLNQLAIVIGILIAQVLGL). Residue Gln177 participates in D-glucose binding. Residues 193–201 (ESLLGTASL) are Extracellular-facing. The helical transmembrane segment at 202–222 (WPLLLGLTVLPALLQLVLLPF) threads the bilayer. A lipid anchor (S-palmitoyl cysteine) is attached at Cys223. Residues 223–287 (CPESPRYLYI…LLGSRTHRQP (65 aa)) lie on the Cytoplasmic side of the membrane. Ser274 is modified (phosphoserine; by SGK1). Residues 288–308 (LIIAVVLQLSQQLSGINAVFY) traverse the membrane as a helical segment. Residues 298–299 (QQ) and Asn304 each bind D-glucose. Over 309-323 (YSTSIFETAGVGQPA) the chain is Extracellular. Residues 324–344 (YATIGAGVVNTVFTLVSVLLV) traverse the membrane as a helical segment. Asn333 is a binding site for D-glucose. Over 345-353 (ERAGRRTLH) the chain is Cytoplasmic. A helical membrane pass occupies residues 354–374 (LLGLAGMCGCAILMTVALLLL). Over 375 to 384 (ERVPAMSYVS) the chain is Extracellular. The helical transmembrane segment at 385-405 (IVAIFGFVAFFEIGPGPIPWF) threads the bilayer. 2 residues coordinate D-glucose: Glu396 and Trp404. The Cytoplasmic segment spans residues 406–417 (IVAELFSQGPRP). A helical membrane pass occupies residues 418–438 (AAMAVAGFSNWTSNFIIGMGF). Residues 439–445 (QYVAEAM) lie on the Extracellular side of the membrane. The chain crosses the membrane as a helical span at residues 446–466 (GPYVFLLFAVLLLGFFIFTFL). Residues 467–509 (RVPETRGRTFDQISAAFHRTPSLLEQEVKPSTELEYLGPDEND) lie on the Cytoplasmic side of the membrane. Position 486 is a phosphothreonine (Thr486). Ser488 carries the phosphoserine modification. The Dileucine internalization motif signature appears at 489-490 (LL).

The protein belongs to the major facilitator superfamily. Sugar transporter (TC 2.A.1.1) family. Glucose transporter subfamily. As to quaternary structure, interacts with NDUFA9. Binds to DAXX. Interacts via its N-terminus with SRFBP1. Interacts with TRARG1; the interaction is required for proper SLC2A4 recycling after insulin stimulation. Post-translationally, sumoylated. Palmitoylated. Palmitoylation by ZDHHC7 controls the insulin-dependent translocation of GLUT4 to the plasma membrane. Skeletal and cardiac muscles; brown and white fat.

The protein resides in the cell membrane. It is found in the endomembrane system. The protein localises to the cytoplasm. It localises to the perinuclear region. The enzyme catalyses D-glucose(out) = D-glucose(in). In terms of biological role, insulin-regulated facilitative glucose transporter, which plays a key role in removal of glucose from circulation. Response to insulin is regulated by its intracellular localization: in the absence of insulin, it is efficiently retained intracellularly within storage compartments in muscle and fat cells. Upon insulin stimulation, translocates from these compartments to the cell surface where it transports glucose from the extracellular milieu into the cell. This Homo sapiens (Human) protein is Solute carrier family 2, facilitated glucose transporter member 4.